A 358-amino-acid chain; its full sequence is Uroporphyrinogen decarboxylase (358 aa).

Substrate-binding positions include arginine 29–arginine 33, phenylalanine 48, aspartate 79, tyrosine 155, serine 210, and histidine 330.

Belongs to the uroporphyrinogen decarboxylase family. Homodimer.

It localises to the cytoplasm. It carries out the reaction uroporphyrinogen III + 4 H(+) = coproporphyrinogen III + 4 CO2. It participates in porphyrin-containing compound metabolism; protoporphyrin-IX biosynthesis; coproporphyrinogen-III from 5-aminolevulinate: step 4/4. In terms of biological role, catalyzes the decarboxylation of four acetate groups of uroporphyrinogen-III to yield coproporphyrinogen-III. The sequence is that of Uroporphyrinogen decarboxylase from Bordetella parapertussis (strain 12822 / ATCC BAA-587 / NCTC 13253).